Reading from the N-terminus, the 820-residue chain is Probable ATP-dependent RNA helicase DDX23 (820 aa).

Basic and acidic residues predominate over residues 1-42; that stretch reads MAGELADKKDRDASPSKEERKRSRTPDRERDRDRDRKSSPSK. A disordered region spans residues 1–244; the sequence is MAGELADKKD…QKIREEKDKS (244 aa). Phosphoserine occurs at positions 14 and 16. Over residues 43 to 65 the composition is skewed to basic residues; sequence DRKRHRSRDRRRGGSRSRSRSRS. A compositionally biased stretch (basic and acidic residues) spans 66 to 105; that stretch reads KSAERERRHKERERDKERDRNKKDRDRDKDGHRRDKDRKR. Residues Ser107 and Ser109 each carry the phosphoserine modification. 3 stretches are compositionally biased toward basic and acidic residues: residues 112–137, 147–226, and 233–244; these read RGKD…DKKP, LLAK…RETN, and GRQKIREEKDKS. The Q motif motif lies at 391–419; the sequence is RSWKDSSLPPHILEVIDKCGYKEPTPIQR. One can recognise a Helicase ATP-binding domain in the interval 422 to 627; sequence IPIGLQNRDI…RSYLRRPAVV (206 aa). Residue 435-442 participates in ATP binding; that stretch reads AETGSGKT. Residues 549 to 552 carry the DEAD box motif; the sequence is DEAD. The region spanning 651 to 799 is the Helicase C-terminal domain; it reads KRKKLLAILE…SCPPELANHP (149 aa). Glycyl lysine isopeptide (Lys-Gly) (interchain with G-Cter in SUMO2) cross-links involve residues Lys686 and Lys811.

It belongs to the DEAD box helicase family. DDX23/PRP28 subfamily. As to quaternary structure, the phosphorylated form (by SRPK2) is a component of the U4/U6-U5 tri-snRNP complex composed of the U4, U6 and U5 snRNAs and at least PRPF3, PRPF4, PRPF6, PRPF8, PRPF31, SNRNP200, TXNL4A, WDR57, SNRNP40, DDX23, CD2BP2, PPIH, SNU13, EFTUD2, SART1 and USP39. Identified in the spliceosome C complex. Interacts with ERBB4. Interacts with ERCC6. In vitro phosphorylated by CLK1 and U1 snRNP-associated protein kinase. Phosphorylated by SRPK2 and this phosphorylation is required for its association with the tri-snRNP (U4/U6-U5 tri-small nuclear ribonucleoproteins) and subsequent spliceosomal B complex formation. May be phosphorylated by SRPK2 on Ser residues in the SR domain; the phosphorylation is required for the removal of inappropriate R-loops during transcription.

It localises to the nucleus. The protein localises to the chromosome. It catalyses the reaction ATP + H2O = ADP + phosphate + H(+). In terms of biological role, involved in pre-mRNA splicing and its phosphorylated form (by SRPK2) is required for spliceosomal B complex formation. Independently of its spliceosome formation function, required for the suppression of incorrect R-loops formed during transcription; R-loops are composed of a DNA:RNA hybrid and the associated non-template single-stranded DNA. This is Probable ATP-dependent RNA helicase DDX23 from Pongo abelii (Sumatran orangutan).